We begin with the raw amino-acid sequence, 711 residues long: DNA ligase (711 aa).

Residues 39–43, 88–89, and Glu-119 contribute to the NAD(+) site; these read DAEYD and SL. Catalysis depends on Lys-121, which acts as the N6-AMP-lysine intermediate. 4 residues coordinate NAD(+): Arg-142, Glu-179, Lys-295, and Lys-319. Cys-416, Cys-419, Cys-434, and Cys-440 together coordinate Zn(2+). The BRCT domain occupies 630-711; that stretch reads ESVSSLAGRA…LRELLAGAGA (82 aa).

The protein belongs to the NAD-dependent DNA ligase family. LigA subfamily. The cofactor is Mg(2+). Mn(2+) is required as a cofactor.

The catalysed reaction is NAD(+) + (deoxyribonucleotide)n-3'-hydroxyl + 5'-phospho-(deoxyribonucleotide)m = (deoxyribonucleotide)n+m + AMP + beta-nicotinamide D-nucleotide.. DNA ligase that catalyzes the formation of phosphodiester linkages between 5'-phosphoryl and 3'-hydroxyl groups in double-stranded DNA using NAD as a coenzyme and as the energy source for the reaction. It is essential for DNA replication and repair of damaged DNA. This chain is DNA ligase, found in Halorhodospira halophila (strain DSM 244 / SL1) (Ectothiorhodospira halophila (strain DSM 244 / SL1)).